The following is a 556-amino-acid chain: 2-methylpropanoate--CoA ligase CCL4 (556 aa).

ATP is bound by residues 192-200 (TSGTTSSPK), 325-330 (HGYGLT), aspartate 423, 435-438 (IKDR), and lysine 531. The segment at 260 to 325 (DSEIIYDMIK…TESLGFAVSH (66 aa)) is SBD1. The tract at residues 326–402 (GYGLTETAGL…LRGGSVMLGY (77 aa)) is SBD2.

The protein belongs to the ATP-dependent AMP-binding enzyme family. Mostly expressed in old leaves and in cones and glandular trichomes (lupulin glands) after flowering, and, to a lower extent, in stems, young leaves and flowers.

The protein resides in the cytoplasm. Its subcellular location is the cytosol. It catalyses the reaction 2-methylpropanoate + ATP + CoA = 2-methylpropanoyl-CoA + AMP + diphosphate. The enzyme catalyses propanoate + ATP + CoA = propanoyl-CoA + AMP + diphosphate. The catalysed reaction is butanoate + ATP + CoA = butanoyl-CoA + AMP + diphosphate. It carries out the reaction 2-methylbutanoate + ATP + CoA = 2-methylbutanoyl-CoA + AMP + diphosphate. It functions in the pathway secondary metabolite biosynthesis. Involved in the biosynthesis of prenylated phenolics natural products which contribute to the bitter taste of beer and display broad biological activities. Catalyzes the ligation of CoA on 2-methylpropanoate (isobutyric acid) and 2-methylbutanoate to produce 2-methylpropanoyl-CoA and 2-methylbutanoyl-CoA, respectively. Can also use propanoate and butanoate as substrates with a lower efficiency. This Humulus lupulus (European hop) protein is 2-methylpropanoate--CoA ligase CCL4.